The primary structure comprises 250 residues: 5-oxoprolinase subunit A (250 aa).

The protein belongs to the LamB/PxpA family. As to quaternary structure, forms a complex composed of PxpA, PxpB and PxpC.

The enzyme catalyses 5-oxo-L-proline + ATP + 2 H2O = L-glutamate + ADP + phosphate + H(+). Catalyzes the cleavage of 5-oxoproline to form L-glutamate coupled to the hydrolysis of ATP to ADP and inorganic phosphate. In Chromohalobacter salexigens (strain ATCC BAA-138 / DSM 3043 / CIP 106854 / NCIMB 13768 / 1H11), this protein is 5-oxoprolinase subunit A.